The following is a 276-amino-acid chain: Bis(5'-nucleosyl)-tetraphosphatase, symmetrical (276 aa).

It belongs to the Ap4A hydrolase family.

The catalysed reaction is P(1),P(4)-bis(5'-adenosyl) tetraphosphate + H2O = 2 ADP + 2 H(+). In terms of biological role, hydrolyzes diadenosine 5',5'''-P1,P4-tetraphosphate to yield ADP. The chain is Bis(5'-nucleosyl)-tetraphosphatase, symmetrical from Legionella pneumophila (strain Corby).